Consider the following 218-residue polypeptide: Capsid protein (218 aa).

Met1 carries the N-acetylmethionine; by host modification. The interval 1 to 31 is disordered; sequence MDKSGSPNASRTSRRRRPRRGSRSASGADAG. The segment covering 12-22 has biased composition (basic residues); it reads TSRRRRPRRGS.

This sequence belongs to the cucumovirus capsid protein family.

The protein localises to the virion. Functionally, capsid protein. Probably binds RNA and plays a role in packaging. In Cucumber mosaic virus (strain Trk7) (CMV), this protein is Capsid protein.